A 370-amino-acid polypeptide reads, in one-letter code: Early nodulin-like protein 1 (370 aa).

An N-terminal signal peptide occupies residues 1-27 (MSAIMKSLCFSFLILASFATFFSVADA). In terms of domain architecture, Phytocyanin spans 28–129 (WRFNVGGNGA…GQKLIVVVLA (102 aa)). Asn58 carries N-linked (GlcNAc...) asparagine glycosylation. Cys83 and Cys117 are joined by a disulfide. Residues 135 to 175 (SAPAHSPVPSVSPTQPPKSHSPVSPVAPASAPSKSQPPRSS) show a composition bias toward low complexity. Positions 135 to 347 (SAPAHSPVPS…PAPSPRTNSA (213 aa)) are disordered. A compositionally biased stretch (polar residues) spans 176-194 (VSPAQPPKSSSPISHTPAL). 2 stretches are compositionally biased toward low complexity: residues 195 to 205 (SPSHATSHSPA) and 215 to 290 (SPVS…QSPA). Residues 291-305 (TPSPMTPQSPSPVSS) show a composition bias toward pro residues. Low complexity predominate over residues 306–318 (PSPDQSAAPSDQS). Residues 319–334 (TPLAPSPSETTPTADN) are compositionally biased toward polar residues. A glycan (N-linked (GlcNAc...) asparagine) is linked at Asn334. Asn345 carries the GPI-anchor amidated asparagine lipid modification. Residues 346–370 (SASGLAVTSVMSTLFSATFTFLMFA) constitute a propeptide, removed in mature form.

It belongs to the early nodulin-like (ENODL) family. Mostly expressed in stems, leaves and flowers, and, to a lower extent, in seedlings, roots and seeds.

It is found in the cell membrane. Functionally, may act as a carbohydrate transporter. The sequence is that of Early nodulin-like protein 1 from Arabidopsis thaliana (Mouse-ear cress).